Here is a 308-residue protein sequence, read N- to C-terminus: tRNA dimethylallyltransferase (308 aa).

16–23 (GPTASGKT) serves as a coordination point for ATP. 18–23 (TASGKT) lines the substrate pocket. Positions 41–44 (DSQQ) are interaction with substrate tRNA.

Belongs to the IPP transferase family. As to quaternary structure, monomer. Mg(2+) is required as a cofactor.

The catalysed reaction is adenosine(37) in tRNA + dimethylallyl diphosphate = N(6)-dimethylallyladenosine(37) in tRNA + diphosphate. In terms of biological role, catalyzes the transfer of a dimethylallyl group onto the adenine at position 37 in tRNAs that read codons beginning with uridine, leading to the formation of N6-(dimethylallyl)adenosine (i(6)A). The chain is tRNA dimethylallyltransferase from Myxococcus xanthus (strain DK1622).